The chain runs to 353 residues: UPF0283 membrane protein YcjF (353 aa).

Residues 1–19 (MSEPLKPRIDFAEPLKEEP) are compositionally biased toward basic and acidic residues. A disordered region spans residues 1-35 (MSEPLKPRIDFAEPLKEEPTSAFKAQQTFSEAESR). The next 3 helical transmembrane spans lie at 70–90 (MVMGGLALFGASVVGQGLQWT), 100–120 (VALGGCAAGALIIGAGVGSVV), and 213–233 (ESTLMIAVSPLALVDMAFIAW).

This sequence belongs to the UPF0283 family.

Its subcellular location is the cell inner membrane. This chain is UPF0283 membrane protein YcjF, found in Salmonella choleraesuis (strain SC-B67).